The chain runs to 188 residues: FMN reductase (NADH) RutF (188 aa).

It belongs to the non-flavoprotein flavin reductase family. RutF subfamily.

The enzyme catalyses FMNH2 + NAD(+) = FMN + NADH + 2 H(+). Functionally, catalyzes the reduction of FMN to FMNH2 which is used to reduce pyrimidine by RutA via the Rut pathway. The polypeptide is FMN reductase (NADH) RutF (Acinetobacter baylyi (strain ATCC 33305 / BD413 / ADP1)).